A 190-amino-acid polypeptide reads, in one-letter code: Adenylate kinase (190 aa).

ATP is bound at residue 12–17 (GSGKTT). An NMP region spans residues 33 to 62 (STGDLLRAEVASGSELGKTIDSFISKGNLV). Residues Thr34, Arg39, 60-62 (NLV), 87-90 (GYPR), and Gln94 contribute to the AMP site. Positions 129–135 (GRARGAD) are LID. Position 130 (Arg130) interacts with ATP. Residues Arg132 and Arg144 each contribute to the AMP site. Arg172 lines the ATP pocket.

The protein belongs to the adenylate kinase family. As to quaternary structure, monomer.

The protein localises to the cytoplasm. The enzyme catalyses AMP + ATP = 2 ADP. It participates in purine metabolism; AMP biosynthesis via salvage pathway; AMP from ADP: step 1/1. Catalyzes the reversible transfer of the terminal phosphate group between ATP and AMP. Plays an important role in cellular energy homeostasis and in adenine nucleotide metabolism. The protein is Adenylate kinase of Campylobacter lari (strain RM2100 / D67 / ATCC BAA-1060).